Consider the following 294-residue polypeptide: Shikimate dehydrogenase (NADP(+)) (294 aa).

Shikimate is bound by residues 23-25 (SRS) and Thr-76. Lys-80 serves as the catalytic Proton acceptor. Positions 101 and 116 each coordinate shikimate. NADP(+) contacts are provided by residues 141–145 (GAGGA) and Met-233. Position 235 (Tyr-235) interacts with shikimate. Gly-256 lines the NADP(+) pocket.

This sequence belongs to the shikimate dehydrogenase family. As to quaternary structure, homodimer.

The enzyme catalyses shikimate + NADP(+) = 3-dehydroshikimate + NADPH + H(+). The protein operates within metabolic intermediate biosynthesis; chorismate biosynthesis; chorismate from D-erythrose 4-phosphate and phosphoenolpyruvate: step 4/7. In terms of biological role, involved in the biosynthesis of the chorismate, which leads to the biosynthesis of aromatic amino acids. Catalyzes the reversible NADPH linked reduction of 3-dehydroshikimate (DHSA) to yield shikimate (SA). This chain is Shikimate dehydrogenase (NADP(+)), found in Methylibium petroleiphilum (strain ATCC BAA-1232 / LMG 22953 / PM1).